A 177-amino-acid polypeptide reads, in one-letter code: Large ribosomal subunit protein uL6 (177 aa).

This sequence belongs to the universal ribosomal protein uL6 family. In terms of assembly, part of the 50S ribosomal subunit.

Functionally, this protein binds to the 23S rRNA, and is important in its secondary structure. It is located near the subunit interface in the base of the L7/L12 stalk, and near the tRNA binding site of the peptidyltransferase center. The protein is Large ribosomal subunit protein uL6 of Stutzerimonas stutzeri (strain A1501) (Pseudomonas stutzeri).